A 206-amino-acid polypeptide reads, in one-letter code: MGNEFDISNAGGLVPMVVEQNARGERAYDIYSRLLKERVIFLIGPVEDYMANLVVAQMLFLESENPDKDIHLYINSPGGSVTAGMSIYDTMQFIKPDVSTVCVGQAASMGALLLAGGAAGKRYCLPHSRMMIHQPLGGYQGQAADIEIHTKEILNIRQQLNEILAKHTGQDAETVARDTDRDNFMNGTQAVEYGLIDAMLDKRPVS.

Serine 108 functions as the Nucleophile in the catalytic mechanism. Histidine 133 is an active-site residue.

The protein belongs to the peptidase S14 family. Fourteen ClpP subunits assemble into 2 heptameric rings which stack back to back to give a disk-like structure with a central cavity, resembling the structure of eukaryotic proteasomes.

It localises to the cytoplasm. It carries out the reaction Hydrolysis of proteins to small peptides in the presence of ATP and magnesium. alpha-casein is the usual test substrate. In the absence of ATP, only oligopeptides shorter than five residues are hydrolyzed (such as succinyl-Leu-Tyr-|-NHMec, and Leu-Tyr-Leu-|-Tyr-Trp, in which cleavage of the -Tyr-|-Leu- and -Tyr-|-Trp bonds also occurs).. In terms of biological role, cleaves peptides in various proteins in a process that requires ATP hydrolysis. Has a chymotrypsin-like activity. Plays a major role in the degradation of misfolded proteins. The polypeptide is ATP-dependent Clp protease proteolytic subunit (Chromohalobacter salexigens (strain ATCC BAA-138 / DSM 3043 / CIP 106854 / NCIMB 13768 / 1H11)).